The primary structure comprises 252 residues: Phosphate import ATP-binding protein PstB 1 (252 aa).

Residues 6 to 247 form the ABC transporter domain; that stretch reads ISSKDLHLYY…PKEKQTEDYI (242 aa). Residue 38–45 coordinates ATP; it reads GPSGCGKS.

Belongs to the ABC transporter superfamily. Phosphate importer (TC 3.A.1.7) family. In terms of assembly, the complex is composed of two ATP-binding proteins (PstB), two transmembrane proteins (PstC and PstA) and a solute-binding protein (PstS).

The protein resides in the cell membrane. It carries out the reaction phosphate(out) + ATP + H2O = ADP + 2 phosphate(in) + H(+). Functionally, part of the ABC transporter complex PstSACB involved in phosphate import. Responsible for energy coupling to the transport system. The sequence is that of Phosphate import ATP-binding protein PstB 1 from Enterococcus faecalis (strain ATCC 700802 / V583).